The chain runs to 62 residues: uncharacterized protein (62 aa).

It localises to the plastid. Its subcellular location is the chloroplast. This is an uncharacterized protein from Guillardia theta (Cryptophyte).